The sequence spans 308 residues: Ornithine carbamoyltransferase (308 aa).

Carbamoyl phosphate is bound by residues R103 and 130–133 (HPAQ). L-ornithine-binding positions include N162, D221, and 225-226 (SM). Residues 261–262 (CL) and R289 each bind carbamoyl phosphate.

It belongs to the aspartate/ornithine carbamoyltransferase superfamily. OTCase family.

The protein resides in the cytoplasm. It catalyses the reaction carbamoyl phosphate + L-ornithine = L-citrulline + phosphate + H(+). It functions in the pathway amino-acid biosynthesis; L-arginine biosynthesis; L-arginine from L-ornithine and carbamoyl phosphate: step 1/3. In terms of biological role, reversibly catalyzes the transfer of the carbamoyl group from carbamoyl phosphate (CP) to the N(epsilon) atom of ornithine (ORN) to produce L-citrulline. The protein is Ornithine carbamoyltransferase of Deinococcus radiodurans (strain ATCC 13939 / DSM 20539 / JCM 16871 / CCUG 27074 / LMG 4051 / NBRC 15346 / NCIMB 9279 / VKM B-1422 / R1).